A 92-amino-acid polypeptide reads, in one-letter code: Bombyxin A-4 (92 aa).

Residues 1–19 (MKILLAIALMLSTVMWVST) form the signal peptide. Pyrrolidone carboxylic acid is present on Q20. 3 cysteine pairs are disulfide-bonded: C29/C79, C41/C92, and C78/C83. The propeptide at 50–70 (SGAQFASYGSAWLMPYSEGRG) is c peptide like.

Belongs to the insulin family. Heterodimer of a B chain and an A chain linked by two disulfide bonds.

The protein resides in the secreted. Brain peptide responsible for activation of prothoracic glands to produce ecdysone in insects. This is Bombyxin A-4 (BBXA4) from Bombyx mori (Silk moth).